The primary structure comprises 892 residues: Translation initiation factor IF-2 (892 aa).

Residues 51–296 are disordered; sequence REHGSAPNKL…KGKRKPSTLQ (246 aa). A compositionally biased stretch (polar residues) spans 68-82; that stretch reads STLNIPSTGGKSKSV. The segment covering 99 to 217 has biased composition (basic and acidic residues); the sequence is EQAKAEEQAQ…KMAAENEGKW (119 aa). The span at 224–237 shows a compositional bias: polar residues; that stretch reads QTESADYHVTTSQH. The segment covering 239 to 254 has biased composition (basic and acidic residues); the sequence is RAAEDENDAKVEGDRR. The span at 255 to 269 shows a compositional bias: basic residues; the sequence is SRTRGGKATKQKKGN. Residues 270-283 show a composition bias toward basic and acidic residues; the sequence is KLSESKADREEARA. In terms of domain architecture, tr-type G spans 391–560; that stretch reads HRAPVVTIMG…LLQAEVMELK (170 aa). The tract at residues 400 to 407 is G1; sequence GHVDHGKT. Residue 400–407 participates in GTP binding; it reads GHVDHGKT. Residues 425 to 429 form a G2 region; sequence GITQH. Residues 446-449 form a G3 region; it reads DTPG. GTP contacts are provided by residues 446-450 and 500-503; these read DTPGH and NKID. The G4 stretch occupies residues 500–503; it reads NKID. The tract at residues 536 to 538 is G5; the sequence is SAK.

Belongs to the TRAFAC class translation factor GTPase superfamily. Classic translation factor GTPase family. IF-2 subfamily.

The protein localises to the cytoplasm. Its function is as follows. One of the essential components for the initiation of protein synthesis. Protects formylmethionyl-tRNA from spontaneous hydrolysis and promotes its binding to the 30S ribosomal subunits. Also involved in the hydrolysis of GTP during the formation of the 70S ribosomal complex. The chain is Translation initiation factor IF-2 from Yersinia enterocolitica serotype O:8 / biotype 1B (strain NCTC 13174 / 8081).